The chain runs to 92 residues: Small ribosomal subunit protein uS19 (92 aa).

It belongs to the universal ribosomal protein uS19 family.

In terms of biological role, protein S19 forms a complex with S13 that binds strongly to the 16S ribosomal RNA. The sequence is that of Small ribosomal subunit protein uS19 from Orientia tsutsugamushi (strain Boryong) (Rickettsia tsutsugamushi).